A 237-amino-acid chain; its full sequence is Ribonuclease PH (237 aa).

Phosphate-binding positions include Arg86 and 124–126 (GTR).

This sequence belongs to the RNase PH family. Homohexameric ring arranged as a trimer of dimers.

It carries out the reaction tRNA(n+1) + phosphate = tRNA(n) + a ribonucleoside 5'-diphosphate. Functionally, phosphorolytic 3'-5' exoribonuclease that plays an important role in tRNA 3'-end maturation. Removes nucleotide residues following the 3'-CCA terminus of tRNAs; can also add nucleotides to the ends of RNA molecules by using nucleoside diphosphates as substrates, but this may not be physiologically important. Probably plays a role in initiation of 16S rRNA degradation (leading to ribosome degradation) during starvation. The chain is Ribonuclease PH from Shewanella woodyi (strain ATCC 51908 / MS32).